The following is a 425-amino-acid chain: Serine--tRNA ligase (425 aa).

Residue 230–232 coordinates L-serine; that stretch reads TAE. An ATP-binding site is contributed by 261–263; sequence RSE. Residue E284 coordinates L-serine. ATP is bound at residue 348–351; that stretch reads EISS. L-serine is bound at residue S384.

The protein belongs to the class-II aminoacyl-tRNA synthetase family. Type-1 seryl-tRNA synthetase subfamily. In terms of assembly, homodimer. The tRNA molecule binds across the dimer.

It localises to the cytoplasm. The catalysed reaction is tRNA(Ser) + L-serine + ATP = L-seryl-tRNA(Ser) + AMP + diphosphate + H(+). The enzyme catalyses tRNA(Sec) + L-serine + ATP = L-seryl-tRNA(Sec) + AMP + diphosphate + H(+). Its pathway is aminoacyl-tRNA biosynthesis; selenocysteinyl-tRNA(Sec) biosynthesis; L-seryl-tRNA(Sec) from L-serine and tRNA(Sec): step 1/1. Its function is as follows. Catalyzes the attachment of serine to tRNA(Ser). Is also able to aminoacylate tRNA(Sec) with serine, to form the misacylated tRNA L-seryl-tRNA(Sec), which will be further converted into selenocysteinyl-tRNA(Sec). This chain is Serine--tRNA ligase, found in Streptococcus equi subsp. zooepidemicus (strain MGCS10565).